A 491-amino-acid chain; its full sequence is Rab5 GDP/GTP exchange factor (491 aa).

The interval 1–74 is interaction with ubiquitinated proteins; it reads MSLKSERRGI…EEEAFASSQS (74 aa). Residues 13-47 form an A20-type zinc finger; sequence DQSDLLCKKGCGYYGNPAWQGFCSKCWREEYHKAR. Zn(2+) contacts are provided by C19, C23, C35, and C38. Positions 66-85 are disordered; the sequence is EEAFASSQSSQGAQSLTFSK. A compositionally biased stretch (low complexity) spans 69-84; that stretch reads FASSQSSQGAQSLTFS. A phosphoserine mark is found at S124 and S132. An N6-acetyllysine mark is found at K151 and K170. The region spanning 232-375 is the VPS9 domain; it reads EKKDLAIQKR…IEKLDAQSLN (144 aa). Phosphoserine is present on residues S373, S377, S390, and S400. The interval 462–491 is disordered; it reads PPNQPLAAIDSENVENDKLPPPLQPQVYAG.

In terms of assembly, interacts with RGS14; the interaction is GTP-dependent. Heterodimer with RABEP1. The heterodimer binds RAB4A and RAB5A that have been activated by GTP-binding. Interacts with RAB21, and with 100-fold lower affinity also with RAB22. Binds TSC2, GGA1, GGA2, GGA3, AP1G1 and AP1G2. Interacts with ubiquitinated EGFR. In terms of processing, monoubiquitinated.

It localises to the cytoplasm. Its subcellular location is the early endosome. The protein localises to the recycling endosome. In terms of biological role, rab effector protein acting as linker between gamma-adaptin, RAB4A or RAB5A. Involved in endocytic membrane fusion and membrane trafficking of recycling endosomes. Stimulates nucleotide exchange on RAB5A. Can act as a ubiquitin ligase. The protein is Rab5 GDP/GTP exchange factor (RABGEF1) of Homo sapiens (Human).